Consider the following 67-residue polypeptide: Amphipathic peptide Tx348 (67 aa).

A signal peptide spans 1–23 (MKSQAFFLLFLVVLLLATTQSEA). At Phe33 the chain carries Phenylalanine amide. Positions 37–67 (SMRNMDTMKYLYDPSLSAADLKTLQKLMENY) are excised as a propeptide.

It belongs to the non-disulfide-bridged peptide (NDBP) superfamily. Short antimicrobial peptide (group 4) family. In terms of tissue distribution, expressed by the venom gland.

It localises to the secreted. Its subcellular location is the target cell membrane. In terms of biological role, amphipathic peptide that has antibacterial activities. The sequence is that of Amphipathic peptide Tx348 from Buthus israelis (Israeli scorpion).